We begin with the raw amino-acid sequence, 178 residues long: Ribosome maturation factor RimM (178 aa).

A PRC barrel domain is found at 100-178 (TDGEYYWYQL…EMKVEWDADF (79 aa)).

This sequence belongs to the RimM family. As to quaternary structure, binds ribosomal protein uS19.

Its subcellular location is the cytoplasm. In terms of biological role, an accessory protein needed during the final step in the assembly of 30S ribosomal subunit, possibly for assembly of the head region. Essential for efficient processing of 16S rRNA. May be needed both before and after RbfA during the maturation of 16S rRNA. It has affinity for free ribosomal 30S subunits but not for 70S ribosomes. The chain is Ribosome maturation factor RimM from Pseudomonas fluorescens (strain SBW25).